We begin with the raw amino-acid sequence, 170 residues long: NADH-quinone oxidoreductase subunit B (170 aa).

Cys-37, Cys-38, Cys-102, and Cys-131 together coordinate [4Fe-4S] cluster.

It belongs to the complex I 20 kDa subunit family. In terms of assembly, NDH-1 is composed of 14 different subunits. Subunits NuoB, C, D, E, F, and G constitute the peripheral sector of the complex. The cofactor is [4Fe-4S] cluster.

Its subcellular location is the cell inner membrane. It catalyses the reaction a quinone + NADH + 5 H(+)(in) = a quinol + NAD(+) + 4 H(+)(out). NDH-1 shuttles electrons from NADH, via FMN and iron-sulfur (Fe-S) centers, to quinones in the respiratory chain. The immediate electron acceptor for the enzyme in this species is believed to be ubiquinone. Couples the redox reaction to proton translocation (for every two electrons transferred, four hydrogen ions are translocated across the cytoplasmic membrane), and thus conserves the redox energy in a proton gradient. This is NADH-quinone oxidoreductase subunit B from Citrifermentans bemidjiense (strain ATCC BAA-1014 / DSM 16622 / JCM 12645 / Bem) (Geobacter bemidjiensis).